The sequence spans 338 residues: Ketol-acid reductoisomerase (NADP(+)) (338 aa).

The region spanning 1–181 (MKVFYDKDCD…GGGRAGIIET (181 aa)) is the KARI N-terminal Rossmann domain. Residues 24-27 (YGSQ), arginine 47, and serine 52 each bind NADP(+). Residue histidine 107 is part of the active site. Glycine 133 provides a ligand contact to NADP(+). In terms of domain architecture, KARI C-terminal knotted spans 182 to 327 (NFREETETDL…GKLRAMMPWI (146 aa)). The Mg(2+) site is built by aspartate 190, glutamate 194, glutamate 226, and glutamate 230. Residue serine 251 coordinates substrate.

It belongs to the ketol-acid reductoisomerase family. It depends on Mg(2+) as a cofactor.

It carries out the reaction (2R)-2,3-dihydroxy-3-methylbutanoate + NADP(+) = (2S)-2-acetolactate + NADPH + H(+). It catalyses the reaction (2R,3R)-2,3-dihydroxy-3-methylpentanoate + NADP(+) = (S)-2-ethyl-2-hydroxy-3-oxobutanoate + NADPH + H(+). The protein operates within amino-acid biosynthesis; L-isoleucine biosynthesis; L-isoleucine from 2-oxobutanoate: step 2/4. It participates in amino-acid biosynthesis; L-valine biosynthesis; L-valine from pyruvate: step 2/4. Functionally, involved in the biosynthesis of branched-chain amino acids (BCAA). Catalyzes an alkyl-migration followed by a ketol-acid reduction of (S)-2-acetolactate (S2AL) to yield (R)-2,3-dihydroxy-isovalerate. In the isomerase reaction, S2AL is rearranged via a Mg-dependent methyl migration to produce 3-hydroxy-3-methyl-2-ketobutyrate (HMKB). In the reductase reaction, this 2-ketoacid undergoes a metal-dependent reduction by NADPH to yield (R)-2,3-dihydroxy-isovalerate. This chain is Ketol-acid reductoisomerase (NADP(+)), found in Bordetella pertussis (strain Tohama I / ATCC BAA-589 / NCTC 13251).